A 323-amino-acid polypeptide reads, in one-letter code: MRNAKLYSFSLPMEAGVVLRYQRLKTRDGFLVCLEQNGKQGWGEISPLPEFSHETLEQAQDAAQSWLAAWCLGENPTDSELPSVAFGISCALAELEGTLPEEANYRAAPLCNGDPDDLILSLNEMSGEKVAKVKVGLYEAVRDGIVVNLLLEAIPDLKLRLDANRSWTPAKAEGFAKYVNPQWRDRIAFLEEPCKTPEESLAFSQATGINIAWDETVRDEGFEVKAQEGVTAIVIKPTLVGSLARCQSIVEQAHALGLEAIISSSIESSFGLTQLARVAQWLTPDSIPGLDTVDLIKQQLIRCWPDVDIPLITLEQLKTVWQQ.

Residue Lys-134 is the Proton donor of the active site. Residues Asp-162, Glu-191, and Asp-214 each coordinate Mg(2+). Lys-236 functions as the Proton acceptor in the catalytic mechanism.

This sequence belongs to the mandelate racemase/muconate lactonizing enzyme family. MenC type 1 subfamily. The cofactor is a divalent metal cation.

It catalyses the reaction (1R,6R)-6-hydroxy-2-succinyl-cyclohexa-2,4-diene-1-carboxylate = 2-succinylbenzoate + H2O. Its pathway is quinol/quinone metabolism; 1,4-dihydroxy-2-naphthoate biosynthesis; 1,4-dihydroxy-2-naphthoate from chorismate: step 4/7. It participates in quinol/quinone metabolism; menaquinone biosynthesis. Its function is as follows. Converts 2-succinyl-6-hydroxy-2,4-cyclohexadiene-1-carboxylate (SHCHC) to 2-succinylbenzoate (OSB). The sequence is that of o-succinylbenzoate synthase from Proteus mirabilis (strain HI4320).